Here is a 316-residue protein sequence, read N- to C-terminus: Pantothenate kinase (316 aa).

Residue 95–102 coordinates ATP; that stretch reads GSVSVGKS.

Belongs to the prokaryotic pantothenate kinase family.

The protein localises to the cytoplasm. The catalysed reaction is (R)-pantothenate + ATP = (R)-4'-phosphopantothenate + ADP + H(+). The protein operates within cofactor biosynthesis; coenzyme A biosynthesis; CoA from (R)-pantothenate: step 1/5. The polypeptide is Pantothenate kinase (Haemophilus ducreyi (strain 35000HP / ATCC 700724)).